The primary structure comprises 283 residues: MKKLEYYLKDAFYYVLSDVKKGIVGGLLSSTSGAIGAIFGIILSILLIHNINPNDVVGLDNNILLTSLIVASFGFLIALIIGFILDGYYVRVMKTTVENYDVLPDWDDIAELLKRGFLYWIGNIILSIIFMIVPILFIIFGVFLIFLPLVGIVFIGIGFLLLFVSTIALLIYEGLAEVNYSVKGFSGFFEFKEIFRMINLNYIILLIIVGVIVIVINFVVQLPFILLKIFAISPARYSTFSSSETIVDVISAVISAFVGFYTAVFAKRAIALYYKDRVEELKK.

Transmembrane regions (helical) follow at residues 28–48, 65–85, 113–133, 135–155, 200–220, and 246–266; these read LSST…ILLI, LTSL…GFIL, LKRG…FMIV, ILFI…IVFI, LNYI…NFVV, and IVDV…AVFA.

This sequence to M.jannaschii MJ0233.

It is found in the cell membrane. This is an uncharacterized protein from Methanocaldococcus jannaschii (strain ATCC 43067 / DSM 2661 / JAL-1 / JCM 10045 / NBRC 100440) (Methanococcus jannaschii).